Reading from the N-terminus, the 255-residue chain is MLKIADTTFHSRLFTGTGKFANANLMTQAIAASGSQLVTMAMKRIDLQSGNDAILAPLQKLGVKLLPNTSGAKTAEEALFAARLAREALATNWIKLEIHPDVKYLLPDPIETLKGAEMLVKDGFVVLPYCSADPVLCKRLEEVGCAAVMPLGAPIGSNQGLLTRDFLQIIIEQAQVPVVIDAGIGAPSHALEALELGADAVLVNTAIAVARNPVKMAQAFRIAIEAGELSYQAGRASPKQHAVASSPLTDFLRVL.

The active-site Schiff-base intermediate with DXP is the Lys95. 1-deoxy-D-xylulose 5-phosphate is bound by residues Gly156, 182–183 (AG), and 204–205 (NT).

The protein belongs to the ThiG family. Homotetramer. Forms heterodimers with either ThiH or ThiS.

It is found in the cytoplasm. It catalyses the reaction [ThiS sulfur-carrier protein]-C-terminal-Gly-aminoethanethioate + 2-iminoacetate + 1-deoxy-D-xylulose 5-phosphate = [ThiS sulfur-carrier protein]-C-terminal Gly-Gly + 2-[(2R,5Z)-2-carboxy-4-methylthiazol-5(2H)-ylidene]ethyl phosphate + 2 H2O + H(+). It functions in the pathway cofactor biosynthesis; thiamine diphosphate biosynthesis. Catalyzes the rearrangement of 1-deoxy-D-xylulose 5-phosphate (DXP) to produce the thiazole phosphate moiety of thiamine. Sulfur is provided by the thiocarboxylate moiety of the carrier protein ThiS. In vitro, sulfur can be provided by H(2)S. In Photorhabdus laumondii subsp. laumondii (strain DSM 15139 / CIP 105565 / TT01) (Photorhabdus luminescens subsp. laumondii), this protein is Thiazole synthase.